The primary structure comprises 446 residues: Protein IQ-DOMAIN 19 (446 aa).

The segment at 93–140 is disordered; the sequence is IPGTPKEKRRWSFRRSSATGPPPPACAITLKDSPPPPPPPPPPPPLQQ. Residues 125–139 show a composition bias toward pro residues; sequence SPPPPPPPPPPPPLQ. IQ domains follow at residues 163 to 191 and 192 to 214; these read EEFAAIKIQACYRSHLARKALRALKGLVK and LQALVRGHLVRKQATATLRCMQA. The tract at residues 214-231 is calmodulin-binding; that stretch reads ALITLQAKAREQRIRMIG. Residues 332 to 345 show a composition bias toward low complexity; that stretch reads QSSKAKARSQSAPK. A disordered region spans residues 332–398; it reads QSSKAKARSQ…TAKESQQHHH (67 aa). Over residues 379–392 the composition is skewed to polar residues; that stretch reads QRSSSQLGSNTAKE.

The protein belongs to the IQD family. Binds to multiple calmodulin (CaM) in the presence of Ca(2+) and CaM-like proteins.

It is found in the cytoplasm. It localises to the cytoskeleton. The protein localises to the cell membrane. Functionally, may be involved in cooperative interactions with calmodulins or calmodulin-like proteins. Recruits calmodulin proteins to microtubules, thus being a potential scaffold in cellular signaling and trafficking. Acts as a positive regulator of trichome branch initiation. May associate with nucleic acids and regulate gene expression at the transcriptional or post-transcriptional level. This is Protein IQ-DOMAIN 19 from Arabidopsis thaliana (Mouse-ear cress).